The following is a 391-amino-acid chain: Formate-dependent phosphoribosylglycinamide formyltransferase (391 aa).

Residues 20–21 (EL) and glutamate 80 each bind N(1)-(5-phospho-beta-D-ribosyl)glycinamide. Residues arginine 112, lysine 153, 158–163 (SSGKGQ), 193–196 (EGFV), and glutamate 201 contribute to the ATP site. The ATP-grasp domain maps to 117–306 (RLAAEELGLP…EFALHVRAFT (190 aa)). Positions 265 and 277 each coordinate Mg(2+). N(1)-(5-phospho-beta-D-ribosyl)glycinamide contacts are provided by residues aspartate 284, lysine 354, and 361–362 (RR).

Belongs to the PurK/PurT family. As to quaternary structure, homodimer.

It catalyses the reaction N(1)-(5-phospho-beta-D-ribosyl)glycinamide + formate + ATP = N(2)-formyl-N(1)-(5-phospho-beta-D-ribosyl)glycinamide + ADP + phosphate + H(+). Its pathway is purine metabolism; IMP biosynthesis via de novo pathway; N(2)-formyl-N(1)-(5-phospho-D-ribosyl)glycinamide from N(1)-(5-phospho-D-ribosyl)glycinamide (formate route): step 1/1. Its function is as follows. Involved in the de novo purine biosynthesis. Catalyzes the transfer of formate to 5-phospho-ribosyl-glycinamide (GAR), producing 5-phospho-ribosyl-N-formylglycinamide (FGAR). Formate is provided by PurU via hydrolysis of 10-formyl-tetrahydrofolate. The polypeptide is Formate-dependent phosphoribosylglycinamide formyltransferase (Vibrio cholerae serotype O1 (strain ATCC 39315 / El Tor Inaba N16961)).